We begin with the raw amino-acid sequence, 634 residues long: DNA-directed RNA polymerase subunit gamma (634 aa).

Cysteine 74, cysteine 76, cysteine 89, and cysteine 92 together coordinate Zn(2+). The Mg(2+) site is built by aspartate 471, aspartate 473, and aspartate 475.

Belongs to the RNA polymerase beta' chain family. RpoC1 subfamily. In cyanobacteria the RNAP catalytic core is composed of 2 alpha, 1 beta, 1 beta', 1 gamma and 1 omega subunit. When a sigma factor is associated with the core the holoenzyme is formed, which can initiate transcription. Mg(2+) serves as cofactor. It depends on Zn(2+) as a cofactor.

The catalysed reaction is RNA(n) + a ribonucleoside 5'-triphosphate = RNA(n+1) + diphosphate. Its function is as follows. DNA-dependent RNA polymerase catalyzes the transcription of DNA into RNA using the four ribonucleoside triphosphates as substrates. The protein is DNA-directed RNA polymerase subunit gamma of Prochlorococcus marinus (strain SARG / CCMP1375 / SS120).